Consider the following 605-residue polypeptide: Terpenoid synthase 18 (605 aa).

Mg(2+) is bound by residues D356, D360, N500, T504, and E508. The DDXXD motif motif lies at 356–360 (DDTYD).

This sequence belongs to the terpene synthase family. Tpsa subfamily. Requires Mg(2+) as cofactor. Mn(2+) is required as a cofactor. Predominantly expressed in flowers and siliques but also in roots and leaves.

It localises to the cytoplasm. Its pathway is secondary metabolite biosynthesis; terpenoid biosynthesis. The protein is Terpenoid synthase 18 (TPS18) of Arabidopsis thaliana (Mouse-ear cress).